A 636-amino-acid polypeptide reads, in one-letter code: Probable Xaa-Pro aminopeptidase P (636 aa).

Asp-414, Asp-425, Glu-523, and Glu-537 together coordinate Mn(2+).

The protein belongs to the peptidase M24B family. It depends on Mn(2+) as a cofactor.

It carries out the reaction Release of any N-terminal amino acid, including proline, that is linked to proline, even from a dipeptide or tripeptide.. Its function is as follows. Catalyzes the removal of a penultimate prolyl residue from the N-termini of peptides. The polypeptide is Probable Xaa-Pro aminopeptidase P (AMPP) (Ajellomyces capsulatus (strain H143) (Darling's disease fungus)).